A 277-amino-acid chain; its full sequence is Movement protein (277 aa).

Belongs to the cucumovirus movement protein family.

Its subcellular location is the host cell junction. It localises to the host plasmodesma. Transports viral genome to neighboring plant cells directly through plasmosdesmata, without any budding. The movement protein allows efficient cell to cell propagation, by bypassing the host cell wall barrier. Acts by forming a tubular structure at the host plasmodesmata, enlarging it enough to allow free passage of virion capsids. The chain is Movement protein from Canna (Florist's daisy).